The chain runs to 28 residues: Small spore coat assembly protein A (28 aa).

Residues 8–28 (GFALLVVLFILLIIVGAAYIY) traverse the membrane as a helical segment.

This sequence belongs to the SscA family.

The protein resides in the spore coat. It is found in the membrane. Its function is as follows. Spore protein involved in the assembly of several components of the spore coat, including CotB, CotG and CotH, and in spore germination. In Bacillus subtilis (strain 168), this protein is Small spore coat assembly protein A.